A 488-amino-acid polypeptide reads, in one-letter code: 3-octaprenyl-4-hydroxybenzoate carboxy-lyase (488 aa).

Residue N172 coordinates Mn(2+). Prenylated FMN-binding positions include 175–177, 189–191, and 194–195; these read IYR, RWL, and RG. Residue E238 participates in Mn(2+) binding. Residue D287 is the Proton donor of the active site.

It belongs to the UbiD family. In terms of assembly, homohexamer. The cofactor is prenylated FMN. Requires Mn(2+) as cofactor.

It localises to the cell membrane. The enzyme catalyses a 4-hydroxy-3-(all-trans-polyprenyl)benzoate + H(+) = a 2-(all-trans-polyprenyl)phenol + CO2. It participates in cofactor biosynthesis; ubiquinone biosynthesis. Catalyzes the decarboxylation of 3-octaprenyl-4-hydroxy benzoate to 2-octaprenylphenol, an intermediate step in ubiquinone biosynthesis. The protein is 3-octaprenyl-4-hydroxybenzoate carboxy-lyase of Legionella pneumophila (strain Paris).